A 298-amino-acid chain; its full sequence is GTP cyclohydrolase FolE2 (298 aa).

This sequence belongs to the GTP cyclohydrolase IV family.

The catalysed reaction is GTP + H2O = 7,8-dihydroneopterin 3'-triphosphate + formate + H(+). It participates in cofactor biosynthesis; 7,8-dihydroneopterin triphosphate biosynthesis; 7,8-dihydroneopterin triphosphate from GTP: step 1/1. Functionally, converts GTP to 7,8-dihydroneopterin triphosphate. The sequence is that of GTP cyclohydrolase FolE2 from Pseudomonas paraeruginosa (strain DSM 24068 / PA7) (Pseudomonas aeruginosa (strain PA7)).